The sequence spans 107 residues: Disintegrin lebestatin (107 aa).

The N-terminal stretch at 1 to 20 (MIQVLLVIICLAVFPFQGSS) is a signal peptide. Residues 21 to 64 (KTLKSGNVNDYEVVNPGTVTGLPKGAVEEKHEPMKGNTLQKFPL) constitute a propeptide that is removed on maturation. 4 disulfides stabilise this stretch: cysteine 65–cysteine 74, cysteine 70–cysteine 93, cysteine 71–cysteine 98, and cysteine 83–cysteine 100. The Disintegrin domain maps to 65–105 (CTTGPCCRQCKLKPAGTTCWKTSRTSHYCTGKSCDCPSYPG). Positions 85 to 87 (KTS) match the Cell attachment site; atypical (KTS) motif. Residues 106-107 (NG) constitute a propeptide that is removed on maturation.

Monomer. As to expression, expressed by the venom gland.

The protein resides in the secreted. Functionally, specifically interacts with the alpha-1/beta-1 integrin (ITGA1/ITGB1). Exhibits highly inhibitory effects on cell adhesion and cell migration to collagens I and IV. Also shows in vivo anti-angiogenic activity. The sequence is that of Disintegrin lebestatin from Macrovipera lebetinus (Levantine viper).